Consider the following 418-residue polypeptide: ATP-dependent RNA helicase RhlB (418 aa).

A Q motif motif is present at residues Thr9–Ala37. One can recognise a Helicase ATP-binding domain in the interval Leu40–Ile219. Ala53–Thr60 contacts ATP. A DEAD box motif is present at residues Asp165–Asp168. A Helicase C-terminal domain is found at Lys243–Leu390.

This sequence belongs to the DEAD box helicase family. RhlB subfamily. In terms of assembly, component of the RNA degradosome, which is a multiprotein complex involved in RNA processing and mRNA degradation.

The protein localises to the cytoplasm. It carries out the reaction ATP + H2O = ADP + phosphate + H(+). Its function is as follows. DEAD-box RNA helicase involved in RNA degradation. Has RNA-dependent ATPase activity and unwinds double-stranded RNA. The protein is ATP-dependent RNA helicase RhlB of Psychromonas ingrahamii (strain DSM 17664 / CCUG 51855 / 37).